A 432-amino-acid chain; its full sequence is PC-esterase domain-containing protein 1B (432 aa).

2 disordered regions span residues 264–293 and 398–432; these read EWIK…LSPP and RGFG…PRPQ.

Belongs to the PC-esterase family.

This is PC-esterase domain-containing protein 1B from Homo sapiens (Human).